The chain runs to 506 residues: Lysine--tRNA ligase (506 aa).

E416 and E423 together coordinate Mg(2+).

This sequence belongs to the class-II aminoacyl-tRNA synthetase family. As to quaternary structure, homodimer. Mg(2+) serves as cofactor.

The protein localises to the cytoplasm. It carries out the reaction tRNA(Lys) + L-lysine + ATP = L-lysyl-tRNA(Lys) + AMP + diphosphate. In Sodalis glossinidius (strain morsitans), this protein is Lysine--tRNA ligase.